A 491-amino-acid chain; its full sequence is NADH-quinone oxidoreductase subunit N (491 aa).

Transmembrane regions (helical) follow at residues 6–26 (TLAP…INWI), 37–57 (VAYP…GMNA), 69–89 (LVVI…GLFV), 103–123 (MFAG…IVMI), 128–148 (FLTL…LVAL), 163–183 (FVLG…MYGA), 206–226 (LAFG…AAPF), 238–258 (PTAV…ALFI), 273–293 (QMML…TAIV), 301–321 (LAYS…SGVV), 335–355 (AMFY…IILL), 379–399 (FAFL…TVGF), 413–433 (GMTW…FYYL), and 458–478 (SMLS…AALM).

This sequence belongs to the complex I subunit 2 family. NDH-1 is composed of 14 different subunits. Subunits NuoA, H, J, K, L, M, N constitute the membrane sector of the complex.

The protein localises to the cell inner membrane. It catalyses the reaction a quinone + NADH + 5 H(+)(in) = a quinol + NAD(+) + 4 H(+)(out). NDH-1 shuttles electrons from NADH, via FMN and iron-sulfur (Fe-S) centers, to quinones in the respiratory chain. The immediate electron acceptor for the enzyme in this species is believed to be ubiquinone. Couples the redox reaction to proton translocation (for every two electrons transferred, four hydrogen ions are translocated across the cytoplasmic membrane), and thus conserves the redox energy in a proton gradient. The protein is NADH-quinone oxidoreductase subunit N of Cupriavidus taiwanensis (strain DSM 17343 / BCRC 17206 / CCUG 44338 / CIP 107171 / LMG 19424 / R1) (Ralstonia taiwanensis (strain LMG 19424)).